The following is a 353-amino-acid chain: Ribosome biogenesis protein BRX1 homolog (353 aa).

A compositionally biased stretch (basic residues) spans 1 to 10 (MAATKRKRRG). Residues 1-46 (MAATKRKRRGGLAVQAKKLKRDAKDGKLPAKANDVSEEAAEEEKDR) form a disordered region. The 190-residue stretch at 60 to 249 (ERILIFSSRG…LIKIFQGSFG (190 aa)) folds into the Brix domain. K160 participates in a covalent cross-link: Glycyl lysine isopeptide (Lys-Gly) (interchain with G-Cter in SUMO2). S261 is modified (phosphoserine). At K276 the chain carries N6-acetyllysine. Glycyl lysine isopeptide (Lys-Gly) (interchain with G-Cter in SUMO2) cross-links involve residues K314 and K322.

The protein belongs to the BRX1 family.

It localises to the nucleus. It is found in the nucleolus. Functionally, required for biogenesis of the 60S ribosomal subunit. In Bos taurus (Bovine), this protein is Ribosome biogenesis protein BRX1 homolog (BRIX1).